The sequence spans 487 residues: NADH-quinone oxidoreductase subunit N (487 aa).

13 helical membrane passes run Leu18–Val38, Val44–Gly64, Val84–Leu104, Val116–Met136, Phe169–Ala189, Leu211–Phe231, Ala242–Ala262, Trp277–Ile297, Met305–Gly325, Met333–Leu353, Ala377–Trp397, Asp410–Leu430, and Val457–Val477.

The protein belongs to the complex I subunit 2 family. As to quaternary structure, NDH-1 is composed of 14 different subunits. Subunits NuoA, H, J, K, L, M, N constitute the membrane sector of the complex.

It localises to the cell inner membrane. The catalysed reaction is a quinone + NADH + 5 H(+)(in) = a quinol + NAD(+) + 4 H(+)(out). In terms of biological role, NDH-1 shuttles electrons from NADH, via FMN and iron-sulfur (Fe-S) centers, to quinones in the respiratory chain. The immediate electron acceptor for the enzyme in this species is believed to be ubiquinone. Couples the redox reaction to proton translocation (for every two electrons transferred, four hydrogen ions are translocated across the cytoplasmic membrane), and thus conserves the redox energy in a proton gradient. In Xanthomonas euvesicatoria pv. vesicatoria (strain 85-10) (Xanthomonas campestris pv. vesicatoria), this protein is NADH-quinone oxidoreductase subunit N.